The chain runs to 174 residues: NADPH-dependent 7-cyano-7-deazaguanine reductase (174 aa).

C72 serves as the catalytic Thioimide intermediate. The active-site Proton donor is D79. Substrate contacts are provided by residues 94-96 and 113-114; these read VES and HE.

The protein belongs to the GTP cyclohydrolase I family. QueF type 1 subfamily.

Its subcellular location is the cytoplasm. It carries out the reaction 7-aminomethyl-7-carbaguanine + 2 NADP(+) = 7-cyano-7-deazaguanine + 2 NADPH + 3 H(+). Its pathway is tRNA modification; tRNA-queuosine biosynthesis. Its function is as follows. Catalyzes the NADPH-dependent reduction of 7-cyano-7-deazaguanine (preQ0) to 7-aminomethyl-7-deazaguanine (preQ1). This Synechococcus elongatus (strain ATCC 33912 / PCC 7942 / FACHB-805) (Anacystis nidulans R2) protein is NADPH-dependent 7-cyano-7-deazaguanine reductase.